The chain runs to 290 residues: Arylamine N-acetyltransferase 1 (290 aa).

Residue Met-1 is modified to N-acetylmethionine. Ser-103 provides a ligand contact to CoA. Residue 106 to 107 (IH) participates in substrate binding. Residue Tyr-208 coordinates CoA.

It belongs to the arylamine N-acetyltransferase family.

The protein resides in the cytoplasm. The catalysed reaction is an arylamine + acetyl-CoA = an N-acetylarylamine + CoA. Functionally, participates in the detoxification of a plethora of hydrazine and arylamine drugs. The polypeptide is Arylamine N-acetyltransferase 1 (NAT1) (Bos taurus (Bovine)).